The sequence spans 397 residues: GPI mannosyltransferase 1 (397 aa).

Helical transmembrane passes span Glu-5–Tyr-25, Trp-79–Met-99, Leu-111–Thr-128, Gly-156–Ile-176, Leu-193–Ile-213, Trp-257–Trp-277, Tyr-307–Ala-327, Ile-330–Leu-350, and Leu-362–Leu-382.

Belongs to the PIGM family.

Its subcellular location is the endoplasmic reticulum membrane. It functions in the pathway glycolipid biosynthesis; glycosylphosphatidylinositol-anchor biosynthesis. Its function is as follows. Mannosyltransferase involved in glycosylphosphatidylinositol-anchor biosynthesis. Transfers the first alpha-1,4-mannose to GlcN-acyl-PI during GPI precursor assembly. Required for cell wall integrity. The polypeptide is GPI mannosyltransferase 1 (GPI14) (Eremothecium gossypii (strain ATCC 10895 / CBS 109.51 / FGSC 9923 / NRRL Y-1056) (Yeast)).